Consider the following 812-residue polypeptide: DNA gyrase subunit A (812 aa).

The Topo IIA-type catalytic domain occupies 31–496; that stretch reads IPDVRDGLKP…GNTDFNVEDV (466 aa). Residue Tyr119 is the O-(5'-phospho-DNA)-tyrosine intermediate of the active site. A GyrA-box motif is present at residues 523–529; the sequence is QGRGGKG.

Belongs to the type II topoisomerase GyrA/ParC subunit family. Heterotetramer, composed of two GyrA and two GyrB chains. In the heterotetramer, GyrA contains the active site tyrosine that forms a transient covalent intermediate with DNA, while GyrB binds cofactors and catalyzes ATP hydrolysis.

The protein resides in the cytoplasm. It catalyses the reaction ATP-dependent breakage, passage and rejoining of double-stranded DNA.. In terms of biological role, a type II topoisomerase that negatively supercoils closed circular double-stranded (ds) DNA in an ATP-dependent manner to modulate DNA topology and maintain chromosomes in an underwound state. Negative supercoiling favors strand separation, and DNA replication, transcription, recombination and repair, all of which involve strand separation. Also able to catalyze the interconversion of other topological isomers of dsDNA rings, including catenanes and knotted rings. Type II topoisomerases break and join 2 DNA strands simultaneously in an ATP-dependent manner. The protein is DNA gyrase subunit A of Kosmotoga olearia (strain ATCC BAA-1733 / DSM 21960 / TBF 19.5.1).